A 179-amino-acid polypeptide reads, in one-letter code: Large ribosomal subunit protein uL5 (179 aa).

Belongs to the universal ribosomal protein uL5 family. In terms of assembly, part of the 50S ribosomal subunit; part of the 5S rRNA/L5/L18/L25 subcomplex. Contacts the 5S rRNA and the P site tRNA. Forms a bridge to the 30S subunit in the 70S ribosome.

Its function is as follows. This is one of the proteins that bind and probably mediate the attachment of the 5S RNA into the large ribosomal subunit, where it forms part of the central protuberance. In the 70S ribosome it contacts protein S13 of the 30S subunit (bridge B1b), connecting the 2 subunits; this bridge is implicated in subunit movement. Contacts the P site tRNA; the 5S rRNA and some of its associated proteins might help stabilize positioning of ribosome-bound tRNAs. The sequence is that of Large ribosomal subunit protein uL5 from Maridesulfovibrio salexigens (strain ATCC 14822 / DSM 2638 / NCIMB 8403 / VKM B-1763) (Desulfovibrio salexigens).